The following is a 195-amino-acid chain: Protein Fer3 (195 aa).

2 disordered regions span residues 1–24 (MQHPHPIDQPTYMPDVPFQPLWGQ) and 56–82 (PLVPQRPSTNGRANGSSSSSKKTRRRV). Over residues 63–75 (STNGRANGSSSSS) the composition is skewed to low complexity. In terms of domain architecture, bHLH spans 86 to 138 (AQRRAANIRERRRMFNLNEAFDKLRRKVPTFAYEKRLSRIETLRLAITYIGFM). The interval 145-175 (TPSNSHKSRSDVYGSMNGHHQAPPPAIHPHH) is disordered.

It is found in the nucleus. Its function is as follows. Transcription factor that binds to the E-box and functions as inhibitor of transcription. DNA binding requires dimerization with an E protein. Inhibits transcription activation by ASCL1/MASH1 by sequestering E proteins. This is Protein Fer3 (fer3) from Drosophila melanogaster (Fruit fly).